Consider the following 155-residue polypeptide: Small ribosomal subunit protein uS7c (155 aa).

The protein belongs to the universal ribosomal protein uS7 family. In terms of assembly, part of the 30S ribosomal subunit.

The protein resides in the plastid. It is found in the chloroplast. Its function is as follows. One of the primary rRNA binding proteins, it binds directly to 16S rRNA where it nucleates assembly of the head domain of the 30S subunit. In Cabomba caroliniana (Carolina fanwort), this protein is Small ribosomal subunit protein uS7c (rps7).